The primary structure comprises 194 residues: Peptidyl-tRNA hydrolase (194 aa).

A tRNA-binding site is contributed by Tyr-16. His-21 functions as the Proton acceptor in the catalytic mechanism. 3 residues coordinate tRNA: Phe-67, Asn-69, and Asn-115.

It belongs to the PTH family. In terms of assembly, monomer.

The protein localises to the cytoplasm. It carries out the reaction an N-acyl-L-alpha-aminoacyl-tRNA + H2O = an N-acyl-L-amino acid + a tRNA + H(+). Functionally, hydrolyzes ribosome-free peptidyl-tRNAs (with 1 or more amino acids incorporated), which drop off the ribosome during protein synthesis, or as a result of ribosome stalling. In terms of biological role, catalyzes the release of premature peptidyl moieties from peptidyl-tRNA molecules trapped in stalled 50S ribosomal subunits, and thus maintains levels of free tRNAs and 50S ribosomes. The chain is Peptidyl-tRNA hydrolase from Colwellia psychrerythraea (strain 34H / ATCC BAA-681) (Vibrio psychroerythus).